A 104-amino-acid chain; its full sequence is MIRKAFVMQVNPDAHEEYQRRHNPIWPELEAVLKSHGAHNYAIYLDKARNLLFAMVEIESEERWNAVASTDVCQRWWKYMTDVMPANPDNSPVSSELQEVFYLP.

Substrate is bound at residue Y18. Residue H22 is the Proton donor of the active site. Residues Y41 and 76–77 (WW) each bind substrate.

Belongs to the rhamnose mutarotase family. In terms of assembly, homodimer.

It is found in the cytoplasm. It catalyses the reaction alpha-L-rhamnose = beta-L-rhamnose. It participates in carbohydrate metabolism; L-rhamnose metabolism. Involved in the anomeric conversion of L-rhamnose. The sequence is that of L-rhamnose mutarotase from Escherichia coli (strain K12 / MC4100 / BW2952).